Here is a 309-residue protein sequence, read N- to C-terminus: Malate dehydrogenase (309 aa).

Residues 9–14 (GAGFVG) and Asp-33 each bind NAD(+). The substrate site is built by Arg-82 and Arg-88. NAD(+) is bound by residues Asn-95 and 118–120 (VNN). Residues Asn-120 and Arg-151 each contribute to the substrate site. Residue His-175 is the Proton acceptor of the active site.

This sequence belongs to the LDH/MDH superfamily. MDH type 3 family.

The enzyme catalyses (S)-malate + NAD(+) = oxaloacetate + NADH + H(+). Its function is as follows. Catalyzes the reversible oxidation of malate to oxaloacetate. The polypeptide is Malate dehydrogenase (Roseiflexus castenholzii (strain DSM 13941 / HLO8)).